An 88-amino-acid polypeptide reads, in one-letter code: Protein alpha-1 (88 aa).

Residues 38-58 (GFWIILIILLGILAIRIAIKV) traverse the membrane as a helical segment.

Its subcellular location is the membrane. The chain is Protein alpha-1 (alpha) from Bos taurus (Bovine).